A 368-amino-acid chain; its full sequence is RAB6-interacting golgin (368 aa).

Disordered regions lie at residues 1 to 43 (MAQD…REKA), 55 to 133 (DGSA…DCKV), and 302 to 368 (KQMA…AVAT). Over residues 11-27 (EELRRLKQNKDPFEPQR) the composition is skewed to basic and acidic residues. A compositionally biased stretch (pro residues) spans 80 to 89 (SPSPVAPSPL). The span at 114-133 (NSHHGHKSAEVRAPKPDCKV) shows a compositional bias: basic and acidic residues. The stretch at 145 to 310 (RWEVLQQEQR…AKQMASVERL (166 aa)) forms a coiled coil. The tract at residues 188 to 368 (IQKELQALDD…AKNFSAAVAT (181 aa)) is necessary for interaction with RCHY1.

The protein belongs to the GORAB family. In terms of assembly, interacts with RCHY1. Interacts with SCYL1 and RAB6A/RAB6. Expressed in small intestine, kidney, skeletal muscle, lung, spleen, brain and heart. High expression is observed in osteoblasts and skin; also expressed in osteoclasts albeit at lower levels.

It localises to the cytoplasm. The protein resides in the golgi apparatus. In Mus musculus (Mouse), this protein is RAB6-interacting golgin (Gorab).